The sequence spans 312 residues: 26S proteasome non-ATPase regulatory subunit 14 (312 aa).

The MPN domain maps to 33–168; it reads VYISSLALLK…IDAFRTINPQ (136 aa). Zn(2+) is bound by residues histidine 115, histidine 117, and aspartate 128. The JAMM motif signature appears at 115 to 128; sequence HSHPGFGCWLSGVD.

This sequence belongs to the peptidase M67A family. PSMD14 subfamily. As to quaternary structure, component of the 19S regulatory cap of the 26S proteasome.

Its function is as follows. Metalloprotease component of the 26S proteasome that specifically cleaves 'Lys-63'-linked polyubiquitin chains. The 26S proteasome is involved in the ATP-dependent degradation of ubiquitinated proteins. The function of the 'Lys-63'-specific deubiquitination of the proteasome is unclear. The polypeptide is 26S proteasome non-ATPase regulatory subunit 14 (rpn-11) (Caenorhabditis elegans).